A 439-amino-acid polypeptide reads, in one-letter code: Glutamine synthetase (439 aa).

One can recognise a GS beta-grasp domain in the interval 12–93 (SKIKFVQLVF…VYGFIYKDNK (82 aa)). In terms of domain architecture, GS catalytic spans 99–439 (PRGILKRALE…EWELERYFFL (341 aa)). Residues Glu122 and Glu124 each coordinate Mg(2+). Residue Glu172 coordinates ATP. The Mg(2+) site is built by Glu177 and Glu184. Gly229 is a binding site for L-glutamate. His233 contacts Mg(2+). ATP contacts are provided by residues 235–237 (HIS) and Ser237. 3 residues coordinate L-glutamate: Arg283, Glu289, and Arg301. ATP contacts are provided by Arg301, Arg306, and Lys313. Glu318 contacts Mg(2+). Arg320 contacts L-glutamate.

It belongs to the glutamine synthetase family. Oligomer of 12 subunits arranged in the form of two hexagons. Requires Mg(2+) as cofactor.

The protein localises to the cytoplasm. It carries out the reaction L-glutamate + NH4(+) + ATP = L-glutamine + ADP + phosphate + H(+). Functionally, probably involved in nitrogen metabolism via ammonium assimilation. Catalyzes the ATP-dependent biosynthesis of glutamine from glutamate and ammonia. This is Glutamine synthetase from Pyrococcus woesei.